The following is a 313-amino-acid chain: D-alanine--D-alanine ligase (313 aa).

The 201-residue stretch at 108 to 308 (KLVWQQLGIP…YQELVVGVLA (201 aa)) folds into the ATP-grasp domain. Position 138–193 (138–193 (VAKLGLPLFVKPASEGSSVAVIKVKSADALPAALIEAVKYDKIVVVEKSVEGGGEY)) interacts with ATP. Positions 262, 275, and 277 each coordinate Mg(2+).

Belongs to the D-alanine--D-alanine ligase family. Requires Mg(2+) as cofactor. It depends on Mn(2+) as a cofactor.

Its subcellular location is the cytoplasm. It carries out the reaction 2 D-alanine + ATP = D-alanyl-D-alanine + ADP + phosphate + H(+). Its pathway is cell wall biogenesis; peptidoglycan biosynthesis. Cell wall formation. The polypeptide is D-alanine--D-alanine ligase (Paraburkholderia phytofirmans (strain DSM 17436 / LMG 22146 / PsJN) (Burkholderia phytofirmans)).